A 284-amino-acid polypeptide reads, in one-letter code: RNase adapter protein RapZ (284 aa).

Residue 8–15 (GRSGSGKS) coordinates ATP. Residue 56 to 59 (DVRN) participates in GTP binding. An RNA-binding region spans residues 266-284 (RSRGKNVQSRHRTLEKRKT).

It belongs to the RapZ-like family. RapZ subfamily. Homotrimer.

In terms of biological role, modulates the synthesis of GlmS, by affecting the processing and stability of the regulatory small RNA GlmZ. When glucosamine-6-phosphate (GlcN6P) concentrations are high in the cell, RapZ binds GlmZ and targets it to cleavage by RNase E. Consequently, GlmZ is inactivated and unable to activate GlmS synthesis. Under low GlcN6P concentrations, RapZ is sequestered and inactivated by an other regulatory small RNA, GlmY, preventing GlmZ degradation and leading to synthesis of GlmS. This Citrobacter koseri (strain ATCC BAA-895 / CDC 4225-83 / SGSC4696) protein is RNase adapter protein RapZ.